A 968-amino-acid polypeptide reads, in one-letter code: Isoleucine--tRNA ligase (968 aa).

The 'HIGH' region signature appears at 68-78 (PYANGALHMGH). Glu-582 contacts L-isoleucyl-5'-AMP. Positions 623-627 (KMSKS) match the 'KMSKS' region motif. Lys-626 provides a ligand contact to ATP. 4 residues coordinate Zn(2+): Cys-936, Cys-939, Cys-956, and Cys-959.

Belongs to the class-I aminoacyl-tRNA synthetase family. IleS type 1 subfamily. Monomer. Zn(2+) is required as a cofactor.

The protein localises to the cytoplasm. The enzyme catalyses tRNA(Ile) + L-isoleucine + ATP = L-isoleucyl-tRNA(Ile) + AMP + diphosphate. In terms of biological role, catalyzes the attachment of isoleucine to tRNA(Ile). As IleRS can inadvertently accommodate and process structurally similar amino acids such as valine, to avoid such errors it has two additional distinct tRNA(Ile)-dependent editing activities. One activity is designated as 'pretransfer' editing and involves the hydrolysis of activated Val-AMP. The other activity is designated 'posttransfer' editing and involves deacylation of mischarged Val-tRNA(Ile). This Prochlorococcus marinus (strain AS9601) protein is Isoleucine--tRNA ligase.